Reading from the N-terminus, the 418-residue chain is MEKFRVIGSDKPLVGEVTISGAKNAALPILFASILAEEPVEVANVPHLRDIDTTMELLKRLGAKVSRNGSVHVDPSSINEYCAPYDLVKTMRASIWALGPLVARFGQGQVSLPGGCAIGARPVDLHITGLEQLGATITLEDGYVKAEVDGRLKGAHIVMDKVSVGATITIMCAAALAEGTTTLDNAAREPEIVDTADFLNKLGAKISGAGTDTITIEGVERLGGGKHSVVADRIETGTFLVAAAVSGGKVVCRNTNGHLLEAVLAKLEEAGALVETGEDWISVDMTDRELKAVSIRTAPHPGFPTDMQAQFTLLNMMAKGGGVITETIFENRFMHVPELMRMGAKAEIEGNTVICGDVESLSGAQVMATDLRASASLVIAGCIAKGETIVDRIYHIDRGYDKIENKLAALGANIERVS.

23–24 (KN) lines the phosphoenolpyruvate pocket. Arginine 92 is a binding site for UDP-N-acetyl-alpha-D-glucosamine. Cysteine 116 functions as the Proton donor in the catalytic mechanism. Cysteine 116 is modified (2-(S-cysteinyl)pyruvic acid O-phosphothioketal). UDP-N-acetyl-alpha-D-glucosamine contacts are provided by residues 121 to 125 (RPVDL), 161 to 164 (KVSV), aspartate 306, and isoleucine 328.

The protein belongs to the EPSP synthase family. MurA subfamily.

Its subcellular location is the cytoplasm. It carries out the reaction phosphoenolpyruvate + UDP-N-acetyl-alpha-D-glucosamine = UDP-N-acetyl-3-O-(1-carboxyvinyl)-alpha-D-glucosamine + phosphate. It participates in cell wall biogenesis; peptidoglycan biosynthesis. In terms of biological role, cell wall formation. Adds enolpyruvyl to UDP-N-acetylglucosamine. This chain is UDP-N-acetylglucosamine 1-carboxyvinyltransferase, found in Vibrio parahaemolyticus serotype O3:K6 (strain RIMD 2210633).